Reading from the N-terminus, the 547-residue chain is MGGCNPFLKAARTLCPRIMPPLLFLSAFIFLVNVLGGAPGHNPDRRTKMISIHSLSELERLKLQETAYHELVARHFLSEFKPDRALPIDRPNTFEKWFLILRGQQRAVSLKTFGIRLEEVLVNELTRRKHLELTAAMQIEESTGQASGRRRGNVVQRLFGRIRRFFSSRRDEPSLPREFTRRGRRGAVSVDSLAELEDGALLLQTLQLSKISFPIGQRLLGSKRKMSLNPIAKQIPQVVEACCSFIEKHGLSAVGIFTLEYSEERVRELREEFDQGLDVVLDDTQNVHDVAALLKEFFRDMKDSLLPDDLYMSFLLTATLKPQDQLSALQLLVYLMPPCHSDTLERLLKALHKITENCEDSIGIDGQLVSGNRMTSTNLALVFGSALLKKGRFAKRESRKTRLGIDHYVASVNVVRAMIDNWDILFQVPPHIQKQVAKRVWKSSPEALDFIRRRNLRKIQSARIKMEEDALLSDPVENSAEAWAAVLAQSKPFDEGSSEEPAVPPGTAHSHDDEEGAGNPPIPEQDRPLLRVPREKQAKTGIGYFFP.

The first 40 residues, 1–40, serve as a signal peptide directing secretion; the sequence is MGGCNPFLKAARTLCPRIMPPLLFLSAFIFLVNVLGGAPG. The Rho-GAP domain maps to 226–426; sequence MSLNPIAKQI…AMIDNWDILF (201 aa). The tract at residues 493–547 is disordered; sequence FDEGSSEEPAVPPGTAHSHDDEEGAGNPPIPEQDRPLLRVPREKQAKTGIGYFFP. Over residues 524–538 the composition is skewed to basic and acidic residues; that stretch reads EQDRPLLRVPREKQA.

Functionally, GTPase activator for the Rho-type GTPases by converting them to an inactive GDP-bound state. This Ailuropoda melanoleuca (Giant panda) protein is Rho GTPase-activating protein 36 (ARHGAP36).